The primary structure comprises 160 residues: SUMO-conjugating enzyme SCE1 (160 aa).

Ala2 carries the post-translational modification N-acetylalanine. The region spanning 5–158 (IARGRLAEER…VKLQSKQYPA (154 aa)) is the UBC core domain. Cys94 functions as the Glycyl thioester intermediate in the catalytic mechanism.

It belongs to the ubiquitin-conjugating enzyme family. As to quaternary structure, interacts with SIZ1 (via PHD domain) and MMS21. Interacts with TCP14 and TCP15. Interacts with KIN10.

Its pathway is protein modification; protein sumoylation. In terms of biological role, SUMO-conjugating enzyme that accepts the SUMO proteins from the E1 SUMO-activating heterodimer SAE1/SAE2 and catalyzes its covalent attachment to other proteins with the E3 SUMO ligases SIZ1 and MMS21. Associates with SIZ1 for sumoylation of the transcription factor GTE3. This is SUMO-conjugating enzyme SCE1 (SCE1) from Arabidopsis thaliana (Mouse-ear cress).